We begin with the raw amino-acid sequence, 415 residues long: MSEADGLRQRRPLRPQVVTDDGQVPEVKEGSSFSGRVFRMTFLMLAVSLAIPLLGAMMLLESPIDPQSFSFKEPPFMFGVLHPNTKLRQAERLFENQLSGPESIVNIGDVLFTGTADGRVVKLENGEIETIARFGSGPCKTRDDEPTCGRPLGIRAGPNGTLFVVDAYKGLFEVNPQKRSVKLLLSSETPIEGKKMSFVNDLTVTRDGRKIYFTDSSSKWQRRDYLLLVMEATDDGRLLEYDTVTKEVKVLLDQLQFPNGVQLSPEEDFVLVAETTMARIRRVYVSGLMKGGADMFVENMPGFPDNIRPSSSGGYWVAAATIRANPGFSMLDFLSDKPFIKRMIFKMFSQETVMKFVPRYSLVLEVSDSGAFRRSLHDPDGQVVTYVSEAHEHDGYLYLGSFRSPFICRLSLQSI.

Residues 1-29 are disordered; it reads MSEADGLRQRRPLRPQVVTDDGQVPEVKE. N-acetylserine is present on serine 2. Residues 2-39 are Cytoplasmic-facing; it reads SEADGLRQRRPLRPQVVTDDGQVPEVKEGSSFSGRVFR. Threonine 19 carries the phosphothreonine modification. Residues 40 to 60 form a helical; Signal-anchor for type II membrane protein membrane-spanning segment; sequence MTFLMLAVSLAIPLLGAMMLL. The Extracellular portion of the chain corresponds to 61–415; it reads ESPIDPQSFS…FICRLSLQSI (355 aa). N-linked (GlcNAc...) asparagine glycosylation is present at asparagine 159.

It belongs to the strictosidine synthase family. Glycosylated in vitro. As to expression, strongly expressed in adipose tissue. Highly expressed in liver, heart, and kidney. Expressed at intermediate level in brain and lung. Weakly expressed in spleen, skeletal muscle and testis.

It localises to the membrane. Functionally, exhibits strong arylesterase activity with beta-naphthyl acetate and phenyl acetate. May play a role in adipocyte differentiation. This Mus musculus (Mouse) protein is Adipocyte plasma membrane-associated protein (Apmap).